The sequence spans 44 residues: Thymosin beta (44 aa).

Residues 1 to 17 (MSDKPDVKEVESFDKTT) show a composition bias toward basic and acidic residues. The interval 1–44 (MSDKPDVKEVESFDKTTLKKTTTNEKNTLPTKEVIEQEKSGGSD) is disordered. Positions 19-32 (KKTTTNEKNTLPTK) are enriched in low complexity. A compositionally biased stretch (basic and acidic residues) spans 33–44 (EVIEQEKSGGSD).

This sequence belongs to the thymosin beta family.

The protein resides in the cytoplasm. It is found in the cytoskeleton. Its function is as follows. Plays an important role in the organization of the cytoskeleton. Binds to and sequesters actin monomers (G actin) and therefore inhibits actin polymerization. This Gillichthys mirabilis (Long-jawed mudsucker) protein is Thymosin beta.